The primary structure comprises 104 residues: Flagellar hook-basal body complex protein FliE (104 aa).

The protein belongs to the FliE family.

Its subcellular location is the bacterial flagellum basal body. The chain is Flagellar hook-basal body complex protein FliE from Escherichia coli O139:H28 (strain E24377A / ETEC).